Reading from the N-terminus, the 216-residue chain is Octanoyltransferase (216 aa).

The 187-residue stretch at glycine 30–alanine 216 folds into the BPL/LPL catalytic domain. Substrate contacts are provided by residues arginine 69–histidine 76, alanine 149–glycine 151, and glycine 162–serine 164. Cysteine 180 serves as the catalytic Acyl-thioester intermediate.

This sequence belongs to the LipB family.

It localises to the cytoplasm. It catalyses the reaction octanoyl-[ACP] + L-lysyl-[protein] = N(6)-octanoyl-L-lysyl-[protein] + holo-[ACP] + H(+). It participates in protein modification; protein lipoylation via endogenous pathway; protein N(6)-(lipoyl)lysine from octanoyl-[acyl-carrier-protein]: step 1/2. In terms of biological role, catalyzes the transfer of endogenously produced octanoic acid from octanoyl-acyl-carrier-protein onto the lipoyl domains of lipoate-dependent enzymes. Lipoyl-ACP can also act as a substrate although octanoyl-ACP is likely to be the physiological substrate. The chain is Octanoyltransferase from Jannaschia sp. (strain CCS1).